The sequence spans 100 residues: Large ribosomal subunit protein bL27 (100 aa).

Positions 1 to 13 (MNKLYWLTDLQLF) are excised as a propeptide. Positions 17–39 (KGVGSSKNGRDSNPKYLGAKLGD) are disordered.

The protein belongs to the bacterial ribosomal protein bL27 family. Post-translationally, the N-terminus is cleaved by ribosomal processing cysteine protease Prp.

The chain is Large ribosomal subunit protein bL27 from Ureaplasma parvum serovar 3 (strain ATCC 700970).